The primary structure comprises 242 residues: Carboxy-S-adenosyl-L-methionine synthase (242 aa).

S-adenosyl-L-methionine contacts are provided by residues Tyr39, Gly64–Ser66, Asp89–Asn90, Asp117–Ile118, Asn132, and Arg199.

The protein belongs to the class I-like SAM-binding methyltransferase superfamily. Cx-SAM synthase family. Homodimer.

The enzyme catalyses prephenate + S-adenosyl-L-methionine = carboxy-S-adenosyl-L-methionine + 3-phenylpyruvate + H2O. In terms of biological role, catalyzes the conversion of S-adenosyl-L-methionine (SAM) to carboxy-S-adenosyl-L-methionine (Cx-SAM). The protein is Carboxy-S-adenosyl-L-methionine synthase of Vibrio atlanticus (strain LGP32) (Vibrio splendidus (strain Mel32)).